Consider the following 147-residue polypeptide: Small ribosomal subunit protein bS6 (147 aa).

The segment at 114-147 (GKGTRAAEQAAAAEAAAPAAAPAEPASAEPAPAV) is disordered. Positions 119-147 (AAEQAAAAEAAAPAAAPAEPASAEPAPAV) are enriched in low complexity.

This sequence belongs to the bacterial ribosomal protein bS6 family.

In terms of biological role, binds together with bS18 to 16S ribosomal RNA. This Koribacter versatilis (strain Ellin345) protein is Small ribosomal subunit protein bS6.